A 599-amino-acid polypeptide reads, in one-letter code: Elongation factor 4 (599 aa).

Residues 4–186 (DNIRNFSIIA…EIVNKIPPPR (183 aa)) enclose the tr-type G domain. GTP contacts are provided by residues 16 to 21 (DHGKST) and 133 to 136 (NKID).

This sequence belongs to the TRAFAC class translation factor GTPase superfamily. Classic translation factor GTPase family. LepA subfamily.

The protein resides in the cell inner membrane. It carries out the reaction GTP + H2O = GDP + phosphate + H(+). Required for accurate and efficient protein synthesis under certain stress conditions. May act as a fidelity factor of the translation reaction, by catalyzing a one-codon backward translocation of tRNAs on improperly translocated ribosomes. Back-translocation proceeds from a post-translocation (POST) complex to a pre-translocation (PRE) complex, thus giving elongation factor G a second chance to translocate the tRNAs correctly. Binds to ribosomes in a GTP-dependent manner. This Geotalea daltonii (strain DSM 22248 / JCM 15807 / FRC-32) (Geobacter daltonii) protein is Elongation factor 4.